A 386-amino-acid polypeptide reads, in one-letter code: Chaperone protein DnaJ (386 aa).

The J domain occupies 3-68; it reads DYYEILEVAR…KKRQVYDRYG (66 aa). The CR-type zinc finger occupies 146-224; sequence GVDKELVISN…CKGQGAVKEK (79 aa). The Zn(2+) site is built by cysteine 159, cysteine 162, cysteine 176, cysteine 179, cysteine 198, cysteine 201, cysteine 212, and cysteine 215. CXXCXGXG motif repeat units follow at residues 159-166, 176-183, 198-205, and 212-219; these read CNVCNGKG, CSECKGRG, CPKCHGEG, and CKNCKGQG.

Belongs to the DnaJ family. In terms of assembly, homodimer. Zn(2+) serves as cofactor.

It is found in the cytoplasm. In terms of biological role, participates actively in the response to hyperosmotic and heat shock by preventing the aggregation of stress-denatured proteins and by disaggregating proteins, also in an autonomous, DnaK-independent fashion. Unfolded proteins bind initially to DnaJ; upon interaction with the DnaJ-bound protein, DnaK hydrolyzes its bound ATP, resulting in the formation of a stable complex. GrpE releases ADP from DnaK; ATP binding to DnaK triggers the release of the substrate protein, thus completing the reaction cycle. Several rounds of ATP-dependent interactions between DnaJ, DnaK and GrpE are required for fully efficient folding. Also involved, together with DnaK and GrpE, in the DNA replication of plasmids through activation of initiation proteins. The polypeptide is Chaperone protein DnaJ (Protochlamydia amoebophila (strain UWE25)).